A 214-amino-acid polypeptide reads, in one-letter code: Outer membrane lipoprotein MapA (214 aa).

The first 17 residues, methionine 1–alanine 17, serve as a signal peptide directing secretion. A lipid anchor (N-palmitoyl cysteine) is attached at cysteine 18. Cysteine 18 is lipidated: S-diacylglycerol cysteine.

It localises to the cell outer membrane. This chain is Outer membrane lipoprotein MapA (mapA), found in Campylobacter jejuni subsp. jejuni serotype O:6 (strain 81116 / NCTC 11828).